A 144-amino-acid chain; its full sequence is Large ribosomal subunit protein uL15 (144 aa).

Residues 1 to 16 (MVVRKEKKSRKYRGYR) are compositionally biased toward basic residues. Positions 1-35 (MVVRKEKKSRKYRGYRTHGWGTKGQHRDRGAQGGR) are disordered.

It belongs to the universal ribosomal protein uL15 family. In terms of assembly, part of the 50S ribosomal subunit.

In terms of biological role, binds to the 23S rRNA. The chain is Large ribosomal subunit protein uL15 from Sulfolobus acidocaldarius (strain ATCC 33909 / DSM 639 / JCM 8929 / NBRC 15157 / NCIMB 11770).